The sequence spans 202 residues: MPDFTIIQPDRKFDAAAVAGIFVRSSTSSSFPSASSYIAAKKRKNVDNTSTRKPYSYKDRKRKNTEEIRNIKKKLFMDLGIVRTNCGIDNEKQDREKAMKRKVTETIVTTYCELCEQNFSSSKMLLLHRGKVHNTPYIECHLCMKLFSQTIQFNRHMKTHYGPNAKIYVQCELCDRQFKDKQSLRTHWDVSHGSGDNQAVLA.

A disordered region spans residues R43–K63. C2H2-type zinc fingers lie at residues T110 to H133, I138 to H160, and V169 to H192.

Its subcellular location is the nucleus. The sequence is that of Putative zinc finger protein ZK686.5 from Caenorhabditis elegans.